A 382-amino-acid chain; its full sequence is S-adenosylmethionine synthase (382 aa).

His16 serves as a coordination point for ATP. Asp18 serves as a coordination point for Mg(2+). A K(+)-binding site is contributed by Glu44. Residues Glu57 and Gln100 each contribute to the L-methionine site. The tract at residues 100-110 (QSPDIAQGVDN) is flexible loop. ATP contacts are provided by residues 165 to 167 (DAK), 231 to 232 (RF), Asp240, 246 to 247 (RK), and Lys267. L-methionine is bound at residue Asp240. Lys271 contacts L-methionine.

Belongs to the AdoMet synthase family. Homotetramer; dimer of dimers. Requires Mg(2+) as cofactor. K(+) is required as a cofactor.

It localises to the cytoplasm. The enzyme catalyses L-methionine + ATP + H2O = S-adenosyl-L-methionine + phosphate + diphosphate. It participates in amino-acid biosynthesis; S-adenosyl-L-methionine biosynthesis; S-adenosyl-L-methionine from L-methionine: step 1/1. Functionally, catalyzes the formation of S-adenosylmethionine (AdoMet) from methionine and ATP. The overall synthetic reaction is composed of two sequential steps, AdoMet formation and the subsequent tripolyphosphate hydrolysis which occurs prior to release of AdoMet from the enzyme. This is S-adenosylmethionine synthase from Legionella pneumophila (strain Lens).